The following is a 288-amino-acid chain: Oxaloacetate decarboxylase (288 aa).

A substrate-binding site is contributed by serine 47. Mg(2+) is bound at residue aspartate 85. The substrate site is built by arginine 156 and histidine 232.

This sequence belongs to the isocitrate lyase/PEP mutase superfamily. Oxaloacetate decarboxylase family. Homotetramer; dimer of dimers. The cofactor is Mg(2+).

It catalyses the reaction oxaloacetate + H(+) = pyruvate + CO2. Its function is as follows. Catalyzes the decarboxylation of oxaloacetate into pyruvate. Seems to play a role in maintaining cellular concentrations of bicarbonate and pyruvate. In Bradyrhizobium sp. (strain BTAi1 / ATCC BAA-1182), this protein is Oxaloacetate decarboxylase.